Reading from the N-terminus, the 632-residue chain is 2-hydroxyacyl-CoA lyase 2 (632 aa).

A helical membrane pass occupies residues 13-33 (FFPSFLLLAFGTLVAAVLGVA). Thiamine diphosphate is bound at residue Glu-98. Phosphoserine is present on Ser-369. The tract at residues 470–550 (DFVATAAYLV…VIALVGNDAG (81 aa)) is thiamine pyrophosphate binding. Mg(2+)-binding residues include Asp-521 and Asn-547.

This sequence belongs to the TPP enzyme family. Mg(2+) is required as a cofactor. The cofactor is thiamine diphosphate.

The protein localises to the endoplasmic reticulum membrane. The catalysed reaction is 2-hydroxyoctadecanoyl-CoA = heptadecanal + formyl-CoA. It carries out the reaction (2R)-hydroxyhexadecanoyl-CoA = pentadecanal + formyl-CoA. In terms of biological role, endoplasmic reticulum 2-OH acyl-CoA lyase involved in the cleavage (C1 removal) reaction in the fatty acid alpha-oxydation in a thiamine pyrophosphate (TPP)-dependent manner. Involved in the phytosphingosine degradation pathway. This Mus musculus (Mouse) protein is 2-hydroxyacyl-CoA lyase 2 (Ilvbl).